A 278-amino-acid polypeptide reads, in one-letter code: Large ribosomal subunit protein uL2 (278 aa).

The span at 210–219 shows a compositional bias: basic residues; it reads RKRWLGKRPQ. Residues 210–278 form a disordered region; that stretch reads RKRWLGKRPQ…LIIRHRKGSK (69 aa). Over residues 258-270 the composition is skewed to basic and acidic residues; sequence KTRDVKKASEKLI.

This sequence belongs to the universal ribosomal protein uL2 family. Part of the 50S ribosomal subunit. Forms a bridge to the 30S subunit in the 70S ribosome.

Functionally, one of the primary rRNA binding proteins. Required for association of the 30S and 50S subunits to form the 70S ribosome, for tRNA binding and peptide bond formation. It has been suggested to have peptidyltransferase activity; this is somewhat controversial. Makes several contacts with the 16S rRNA in the 70S ribosome. This is Large ribosomal subunit protein uL2 from Lactobacillus acidophilus (strain ATCC 700396 / NCK56 / N2 / NCFM).